The following is a 407-amino-acid chain: E3 ubiquitin-protein ligase TRIM13 (407 aa).

Residues 10–58 (CPICCSLFDDPRVLPCSHNFCKKCLEGILEGNVRNSLWRSSPFKCPTCR) form an RING-type zinc finger. A B box-type zinc finger spans residues 89–131 (PKMPVCKGHLGQPLNIFCLTDMQLICGICATRGEHTKHVFCSI). Cysteine 94, histidine 97, cysteine 117, and histidine 123 together coordinate Zn(2+). Positions 172–200 (LQLLTKDSDKVKEFFEKLQYTLDQKKNEI) form a coiled coil. The chain crosses the membrane as a helical span at residues 316–336 (PLFVVVILLGLLIFFSPTMFL).

Interacts (via C-terminal domain) with VCP. Interacts with AKT1; the interaction ubiquitinates AKT1 and leads to its proteasomal degradation. Interacts with MDM2; the interaction ubiquitinates AKT1 and leads to its proteasomal degradation. Interacts with p62/SQSTM1. Interacts with TRAF6. Interacts with IKBKG/NEMO. Post-translationally, auto-ubiquitinated; requires the RING-type zinc finger. Auto-polyubiquitination leads to proteasomal degradation.

The protein resides in the endoplasmic reticulum membrane. It carries out the reaction S-ubiquitinyl-[E2 ubiquitin-conjugating enzyme]-L-cysteine + [acceptor protein]-L-lysine = [E2 ubiquitin-conjugating enzyme]-L-cysteine + N(6)-ubiquitinyl-[acceptor protein]-L-lysine.. It participates in protein modification; protein ubiquitination. Its function is as follows. Endoplasmic reticulum (ER) membrane anchored E3 ligase involved in the retrotranslocation and turnover of membrane and secretory proteins from the ER through a set of processes named ER-associated degradation (ERAD). This process acts on misfolded proteins as well as in the regulated degradation of correctly folded proteins. Enhances ionizing radiation-induced p53/TP53 stability and apoptosis via ubiquitinating MDM2 and AKT1 and decreasing AKT1 kinase activity through MDM2 and AKT1 proteasomal degradation. Regulates ER stress-induced autophagy, and may act as a tumor suppressor. Also plays a role in innate immune response by stimulating NF-kappa-B activity in the TLR2 signaling pathway. Ubiquitinates TRAF6 via the 'Lys-29'-linked polyubiquitination chain resulting in NF-kappa-B activation. Participates as well in T-cell receptor-mediated NF-kappa-B activation. In the presence of TNF, modulates the IKK complex by regulating IKBKG/NEMO ubiquitination leading to the repression of NF-kappa-B. This Bos taurus (Bovine) protein is E3 ubiquitin-protein ligase TRIM13 (TRIM13).